The primary structure comprises 257 residues: UPF0246 protein CLH_2088 (257 aa).

This sequence belongs to the UPF0246 family.

This is UPF0246 protein CLH_2088 from Clostridium botulinum (strain Alaska E43 / Type E3).